The chain runs to 213 residues: Uridine kinase (213 aa).

15 to 22 (GASASGKS) is an ATP binding site.

The protein belongs to the uridine kinase family.

Its subcellular location is the cytoplasm. The catalysed reaction is uridine + ATP = UMP + ADP + H(+). The enzyme catalyses cytidine + ATP = CMP + ADP + H(+). The protein operates within pyrimidine metabolism; CTP biosynthesis via salvage pathway; CTP from cytidine: step 1/3. Its pathway is pyrimidine metabolism; UMP biosynthesis via salvage pathway; UMP from uridine: step 1/1. This is Uridine kinase from Proteus mirabilis (strain HI4320).